The sequence spans 134 residues: Phosphoribosyl-AMP cyclohydrolase (134 aa).

D78 is a Mg(2+) binding site. C79 lines the Zn(2+) pocket. Mg(2+) is bound by residues D80 and D82. Residues C96 and C103 each contribute to the Zn(2+) site.

It belongs to the PRA-CH family. Homodimer. Mg(2+) is required as a cofactor. The cofactor is Zn(2+).

It localises to the cytoplasm. The catalysed reaction is 1-(5-phospho-beta-D-ribosyl)-5'-AMP + H2O = 1-(5-phospho-beta-D-ribosyl)-5-[(5-phospho-beta-D-ribosylamino)methylideneamino]imidazole-4-carboxamide. Its pathway is amino-acid biosynthesis; L-histidine biosynthesis; L-histidine from 5-phospho-alpha-D-ribose 1-diphosphate: step 3/9. Catalyzes the hydrolysis of the adenine ring of phosphoribosyl-AMP. In Cupriavidus taiwanensis (strain DSM 17343 / BCRC 17206 / CCUG 44338 / CIP 107171 / LMG 19424 / R1) (Ralstonia taiwanensis (strain LMG 19424)), this protein is Phosphoribosyl-AMP cyclohydrolase.